Reading from the N-terminus, the 333-residue chain is DNA-directed RNA polymerase subunit alpha (333 aa).

Residues 1–239 form an alpha N-terminal domain (alpha-NTD) region; it reads MSAVLDKGSL…TQARCFLNIA (239 aa). The interval 259–333 is alpha C-terminal domain (alpha-CTD); sequence DASDLLSARI…SLGMNLDSHG (75 aa).

Belongs to the RNA polymerase alpha chain family. In terms of assembly, homodimer. The RNAP catalytic core consists of 2 alpha, 1 beta, 1 beta' and 1 omega subunit. When a sigma factor is associated with the core the holoenzyme is formed, which can initiate transcription.

The catalysed reaction is RNA(n) + a ribonucleoside 5'-triphosphate = RNA(n+1) + diphosphate. In terms of biological role, DNA-dependent RNA polymerase catalyzes the transcription of DNA into RNA using the four ribonucleoside triphosphates as substrates. This is DNA-directed RNA polymerase subunit alpha from Neorickettsia sennetsu (strain ATCC VR-367 / Miyayama) (Ehrlichia sennetsu).